Consider the following 34-residue polypeptide: MFSSFNVLIILRGFVRLKKWFNIDSELAFFFPKK.

This is Tryptophanase operon leader peptide (tnaL) from Proteus vulgaris.